A 510-amino-acid polypeptide reads, in one-letter code: Histidine ammonia-lyase (510 aa).

The segment at residues 143–145 (ASG) is a cross-link (5-imidazolinone (Ala-Gly)). Serine 144 bears the 2,3-didehydroalanine (Ser) mark.

It belongs to the PAL/histidase family. Contains an active site 4-methylidene-imidazol-5-one (MIO), which is formed autocatalytically by cyclization and dehydration of residues Ala-Ser-Gly.

It is found in the cytoplasm. The catalysed reaction is L-histidine = trans-urocanate + NH4(+). It participates in amino-acid degradation; L-histidine degradation into L-glutamate; N-formimidoyl-L-glutamate from L-histidine: step 1/3. In Aliivibrio fischeri (strain ATCC 700601 / ES114) (Vibrio fischeri), this protein is Histidine ammonia-lyase.